A 1606-amino-acid polypeptide reads, in one-letter code: Fatty acid synthase apf5 (1606 aa).

Residues 142-218 (VPVSAILISL…ETLSTSHDGQ (77 aa)) form the Carrier domain. S177 bears the O-(pantetheine 4'-phosphoryl)serine mark. In terms of domain architecture, Ketosynthase family 3 (KS3) spans 996-1539 (KESLIEVALQ…QKGGQALLVH (544 aa)). Catalysis depends on for beta-ketoacyl synthase activity residues C1182, H1424, and H1465.

It belongs to the thiolase-like superfamily. Fungal fatty acid synthetase subunit alpha family.

It carries out the reaction a fatty acyl-[ACP] + malonyl-[ACP] + H(+) = a 3-oxoacyl-[ACP] + holo-[ACP] + CO2. It participates in secondary metabolite biosynthesis. Functionally, fatty acid synthase; part of the gene cluster that mediates the biosynthesis of the cyclic tetrapeptide apicidin F (APF). The non-ribosomal peptide synthetase apf1 incorporates four different amino acids to produce apicidin F: L-phenylalanine, D-pipecolic acid (D-pip), N-methoxy-L-tryptophan and L-2-aminooctanedioic acid. L-Phenylalanine is the only proteinogenic amino acid directly used by apf1. The 3 other apf1 substrates are non-proteinogenic and have to be modified by other enzymes of the cluster. Lysine is converted to delta-1-pyrroline-5-carboxylate (P5C) which is reduced to L-pipecolic acid (L-pip) by apf3. L-pip is epimerized to D-pip, probably by apf1 activity, prior to incorporation. L-Tryptophan is N-oxidyzed by one of the cytochrome P450 monooxygenases (apf7 or apf8), and further methylated at the hydroxy group by the O-methyltransferase apf6 to yield N-methoxy-L-tryptophan. The synthesis of the fourth apf1 substrate is more complex. The fatty acid synthase apf5 is involved in the synthesis of the octanoic acid backbone of L-2-aminooctanedioic acid by fixing one acetyl-CoA unit and three malonyl-CoA units. Then one of the cytochrome P450 monooxygenases (apf7 or apf8) may oxidize this backbone to 2-oxooctanoic acid. The aminotransferase apf4 is predicted to catalyze the exchange of the keto group with an amino group. The next step would be the oxidation of 2-aminooctanoic acid by one of the cytochrome P450 monooxygenases (apf7 or apf8). The last step is the oxidation of 2-amino-8-hydroxyoctanoic acid to 2-aminooctanedioic acid is catalyzed by the FAD-dependent monooxygenase apf9. This is Fatty acid synthase apf5 from Gibberella fujikuroi (strain CBS 195.34 / IMI 58289 / NRRL A-6831) (Bakanae and foot rot disease fungus).